A 153-amino-acid chain; its full sequence is MEKREVNKALYDLQRSAMVYSSNDTPPRWSTTMDADTRPTDSDADAIIDDVSREKSMREDHKSFDDVIPVKKIIYWKGVNPVTVINEYCQITRRDWSFRIESVGPSNSPTFYACVDIDGRVFDKADGKSKRDAKNNAAKLAVDKLLSYVIIRF.

The Z-binding domain occupies 1–33 (MEKREVNKALYDLQRSAMVYSSNDTPPRWSTTM). Over residues 22–34 (SNDTPPRWSTTMD) the composition is skewed to polar residues. The tract at residues 22-44 (SNDTPPRWSTTMDADTRPTDSDA) is disordered. In terms of domain architecture, DRBM spans 80 to 147 (NPVTVINEYC…AKLAVDKLLS (68 aa)).

It belongs to the orthopoxvirus OPG065 family. Interacts with host G1P2/ISG15. Interacts with host EIF2AK2/PKR. Interacts with host ZBP1.

Its function is as follows. RNA-binding protein that plays a role in the inhibition of multiple cellular antiviral responses activated by double-stranded RNA (dsRNA), such as inhibition of PKR activation, necroptosis, and IFN-mediated antiviral activities. Recognizes and binds Z-RNA structures via its Z-binding domain and dsRNA via its DRBM domain: RNA-binding activity is required to escape host ZBP1-dependent necroptosis. Mechanistically, the Z-binding domain binds Z-RNAs that are produced during vaccinia virus infection, thereby competing with Z-RNA detection by host ZBP1, suppressing ZBP1-dependent necroptosis. Acts as a key inhibitor of the interferon response by blocking the phosphorylation and subsequent activation of IRF3 and IRF7 kinases that are required for interferon-alpha gene expression. Inhibits NF-kappa-B activation and the ubiquitin-like protein ISG15, which is an early antiviral protein. The binding with host ISG15 subsequently blocks host ISGylation. The protein is RNA-binding protein OPG065 (OPG065) of Monkeypox virus.